Consider the following 138-residue polypeptide: Phosphoribosyl-AMP cyclohydrolase (138 aa).

D85 provides a ligand contact to Mg(2+). C86 is a binding site for Zn(2+). The Mg(2+) site is built by D87 and D89. 2 residues coordinate Zn(2+): C102 and C109.

It belongs to the PRA-CH family. Homodimer. Mg(2+) serves as cofactor. The cofactor is Zn(2+).

It localises to the cytoplasm. The enzyme catalyses 1-(5-phospho-beta-D-ribosyl)-5'-AMP + H2O = 1-(5-phospho-beta-D-ribosyl)-5-[(5-phospho-beta-D-ribosylamino)methylideneamino]imidazole-4-carboxamide. It participates in amino-acid biosynthesis; L-histidine biosynthesis; L-histidine from 5-phospho-alpha-D-ribose 1-diphosphate: step 3/9. Catalyzes the hydrolysis of the adenine ring of phosphoribosyl-AMP. The protein is Phosphoribosyl-AMP cyclohydrolase of Methanothermobacter thermautotrophicus (strain ATCC 29096 / DSM 1053 / JCM 10044 / NBRC 100330 / Delta H) (Methanobacterium thermoautotrophicum).